A 185-amino-acid chain; its full sequence is Ribosome-recycling factor (185 aa).

This sequence belongs to the RRF family.

Its subcellular location is the cytoplasm. Functionally, responsible for the release of ribosomes from messenger RNA at the termination of protein biosynthesis. May increase the efficiency of translation by recycling ribosomes from one round of translation to another. In Methylococcus capsulatus (strain ATCC 33009 / NCIMB 11132 / Bath), this protein is Ribosome-recycling factor.